Reading from the N-terminus, the 183-residue chain is Photosystem I assembly protein Ycf3 (183 aa).

3 TPR repeats span residues 35-68, 72-105, and 120-153; these read AFIYYRDGMSAQSEGEYAEALGSYYKAMRLEIDS, SYILYNIGLIHTSNGNHAKALEYYFQALERNSFL, and GEQAIYQGDLEISEAWFDQAAEYWRRAIALSPDN.

It belongs to the Ycf3 family.

The protein localises to the plastid. The protein resides in the chloroplast thylakoid membrane. Functionally, essential for the assembly of the photosystem I (PSI) complex. May act as a chaperone-like factor to guide the assembly of the PSI subunits. This is Photosystem I assembly protein Ycf3 from Adiantum capillus-veneris (Maidenhair fern).